We begin with the raw amino-acid sequence, 265 residues long: Indole-3-glycerol phosphate synthase (265 aa).

The protein belongs to the TrpC family.

It carries out the reaction 1-(2-carboxyphenylamino)-1-deoxy-D-ribulose 5-phosphate + H(+) = (1S,2R)-1-C-(indol-3-yl)glycerol 3-phosphate + CO2 + H2O. The protein operates within amino-acid biosynthesis; L-tryptophan biosynthesis; L-tryptophan from chorismate: step 4/5. The chain is Indole-3-glycerol phosphate synthase from Hyphomonas neptunium (strain ATCC 15444).